A 151-amino-acid chain; its full sequence is Methylglyoxal synthase (151 aa).

Residues 6–151 (RTMPAHKHVA…DYDAYLAERT (146 aa)) form the MGS-like domain. Substrate contacts are provided by residues His19, Lys23, 45 to 48 (TGTT), and 65 to 66 (SG). Residue Asp71 is the Proton donor/acceptor of the active site. His98 is a binding site for substrate.

Belongs to the methylglyoxal synthase family.

The catalysed reaction is dihydroxyacetone phosphate = methylglyoxal + phosphate. Catalyzes the formation of methylglyoxal from dihydroxyacetone phosphate. The sequence is that of Methylglyoxal synthase from Vibrio campbellii (strain ATCC BAA-1116).